The following is a 143-amino-acid chain: DEQEGCASGWVPFDGRCFGFFPQELSWRRAEGFCQRLGARTHLASIHSEEEHQAIMSMLASSQPYSESEEEVADEEVWIGLHRPMGRRHWEWSDGTKMDYSSWYREGFPRRRACAALEDSTDFASWDTELCSDRKPFICEYHV.

Cystine bridges form between Cys6/Cys17, Cys34/Cys139, and Cys114/Cys131. The C-type lectin domain occupies 13–140; that stretch reads FDGRCFGFFP…CSDRKPFICE (128 aa). Ser66 and Ser68 each carry phosphoserine.

The protein localises to the secreted. It is found in the extracellular space. Its subcellular location is the extracellular matrix. This chain is Rheacalcin-2, found in Rhea americana (Greater rhea).